The chain runs to 185 residues: Ribosome-recycling factor (185 aa).

Belongs to the RRF family.

Its subcellular location is the cytoplasm. Its function is as follows. Responsible for the release of ribosomes from messenger RNA at the termination of protein biosynthesis. May increase the efficiency of translation by recycling ribosomes from one round of translation to another. The polypeptide is Ribosome-recycling factor (Helicobacter pylori (strain Shi470)).